Here is a 417-residue protein sequence, read N- to C-terminus: Gamma-glutamyl phosphate reductase (417 aa).

The protein belongs to the gamma-glutamyl phosphate reductase family.

It is found in the cytoplasm. The enzyme catalyses L-glutamate 5-semialdehyde + phosphate + NADP(+) = L-glutamyl 5-phosphate + NADPH + H(+). The protein operates within amino-acid biosynthesis; L-proline biosynthesis; L-glutamate 5-semialdehyde from L-glutamate: step 2/2. Catalyzes the NADPH-dependent reduction of L-glutamate 5-phosphate into L-glutamate 5-semialdehyde and phosphate. The product spontaneously undergoes cyclization to form 1-pyrroline-5-carboxylate. The chain is Gamma-glutamyl phosphate reductase from Escherichia coli O7:K1 (strain IAI39 / ExPEC).